Here is a 284-residue protein sequence, read N- to C-terminus: 2-dehydro-3-deoxyphosphooctonate aldolase (284 aa).

It belongs to the KdsA family.

The protein resides in the cytoplasm. It catalyses the reaction D-arabinose 5-phosphate + phosphoenolpyruvate + H2O = 3-deoxy-alpha-D-manno-2-octulosonate-8-phosphate + phosphate. The protein operates within carbohydrate biosynthesis; 3-deoxy-D-manno-octulosonate biosynthesis; 3-deoxy-D-manno-octulosonate from D-ribulose 5-phosphate: step 2/3. Its pathway is bacterial outer membrane biogenesis; lipopolysaccharide biosynthesis. This Edwardsiella ictaluri (strain 93-146) protein is 2-dehydro-3-deoxyphosphooctonate aldolase.